Reading from the N-terminus, the 398-residue chain is Cholinephosphotransferase 1 (398 aa).

Position 2 is an N-acetylalanine (Ala2). Residues 2-62 (AAGAGARPAP…LLQWIPLWMA (61 aa)) are Cytoplasmic-facing. The chain crosses the membrane as a helical span at residues 63–83 (PNTITLIGLAINLVTTLVLIF). Asn64 contributes to the CDP-choline binding site. The Lumenal portion of the chain corresponds to 84–93 (YCPTVTEEAP). Residues 94-118 (YWTYLLCALGLFIYQSLDAIDGKQA) traverse the membrane as a helical segment. Residues Asp111 and Asp114 each coordinate Mg(2+). Arg119 contacts CDP-choline. The Cytoplasmic segment spans residues 119–125 (RRTNSCS). Residues 126 to 150 (PLGELFDHGCDSLSTVFMAIGASIA) form a helical membrane-spanning segment. Asp132 contacts Mg(2+). Residue His133 is the Proton acceptor of the active site. Residue Asp136 coordinates Mg(2+). Topologically, residues 151–160 (VRLGTHPDWL) are lumenal. The helical transmembrane segment at 161–179 (FFCSFVGMFMFYCAHWQTY) threads the bilayer. Residues 180–190 (VSGVLRFGRVD) lie on the Cytoplasmic side of the membrane. The helical transmembrane segment at 191 to 207 (VTEIQVALVIVFMLSTF) threads the bilayer. Over 208 to 222 (GGATMWDYTIPILEI) the chain is Lumenal. Residues 223–248 (KLKIVPVLGVVGGLIFSCSNYFHVIL) form a helical membrane-spanning segment. Topologically, residues 249–265 (HGGVGKNGSTIAGTSVL) are cytoplasmic. A helical membrane pass occupies residues 266–281 (SPGLHIGLIIILAIMI). The Lumenal segment spans residues 282–293 (YKKSATNMFEKH). A helical transmembrane segment spans residues 294-316 (PCLYTLMFGCVFAKVAQKLVIAH). At 317–329 (MTKSELYLQDTVF) the chain is on the cytoplasmic side. Residues 330 to 339 (IGPGLLFLDQ) form a helical membrane-spanning segment. Over 340–346 (YFNNFID) the chain is Lumenal. The helical transmembrane segment at 347–376 (EYVVLWIAMVISSFDMMIYFTSLCLQISRH) threads the bilayer. The Cytoplasmic portion of the chain corresponds to 377–398 (LHLNIFKTSCQQAPEQVYKHID).

It belongs to the CDP-alcohol phosphatidyltransferase class-I family. Requires Mg(2+) as cofactor. The cofactor is Mn(2+). As to expression, expressed in brain, heart, lung, liver, spleen, intestine and muscle. Down-regulated in kidney of type 2 diabetic KK/Ta mice.

Its subcellular location is the golgi apparatus membrane. The catalysed reaction is CDP-choline + a 1,2-diacyl-sn-glycerol = a 1,2-diacyl-sn-glycero-3-phosphocholine + CMP + H(+). It carries out the reaction 1-octadecanoyl-2-(5Z,8Z,11Z,14Z-eicosatetraenoyl)-sn-glycerol + CDP-choline = 1-octadecanoyl-2-(5Z,8Z,11Z,14Z-eicosatetraenoyl)-sn-glycero-3-phosphocholine + CMP + H(+). The enzyme catalyses 1-hexadecanoyl-2-(9Z-octadecenoyl)-sn-glycerol + CDP-choline = 1-hexadecanoyl-2-(9Z-octadecenoyl)-sn-glycero-3-phosphocholine + CMP + H(+). It catalyses the reaction 1-hexadecanoyl-2-(4Z,7Z,10Z,13Z,16Z,19Z-docosahexaenoyl)-sn-glycerol + CDP-choline = 1-hexadecanoyl-2-(4Z,7Z,10Z,13Z,16Z,19Z-docosahexaenoyl)-sn-glycero-3-phosphocholine + CMP + H(+). The catalysed reaction is 1,2-dioctanoyl-sn-glycerol + CDP-choline = 1,2-dioctanoyl-sn-glycero-3-phosphocholine + CMP + H(+). It functions in the pathway phospholipid metabolism; phosphatidylcholine biosynthesis; phosphatidylcholine from phosphocholine: step 2/2. Catalyzes the final step of de novo phosphatidylcholine (PC) synthesis, i.e. the transfer of choline phosphate from CDP-choline to the free hydroxyl of a diacylglycerol (DAG), producing a PC. It thereby plays a central role in the formation and maintenance of vesicular membranes. The protein is Cholinephosphotransferase 1 of Mus musculus (Mouse).